A 616-amino-acid polypeptide reads, in one-letter code: Chaperone protein HscA (616 aa).

The protein belongs to the heat shock protein 70 family.

Functionally, chaperone involved in the maturation of iron-sulfur cluster-containing proteins. Has a low intrinsic ATPase activity which is markedly stimulated by HscB. Involved in the maturation of IscU. The protein is Chaperone protein HscA of Proteus mirabilis (strain HI4320).